An 88-amino-acid chain; its full sequence is MANSKTAKKRAIQSEKRRQHNASRRSMLRTYVKKVIAAIKTGDHKAATEAFAVAQPIVDRMATKGLIHKNKAARQKARLNARIKALAA.

Positions 1–27 are disordered; that stretch reads MANSKTAKKRAIQSEKRRQHNASRRSM.

The protein belongs to the bacterial ribosomal protein bS20 family.

Binds directly to 16S ribosomal RNA. The protein is Small ribosomal subunit protein bS20 of Shewanella amazonensis (strain ATCC BAA-1098 / SB2B).